The sequence spans 396 residues: F-box protein At2g21930 (396 aa).

The F-box domain maps to 19-65 (SGNSVQIPFDLIPEILKRLPVKTLARFLSVSKEYTSIIRNRDFMKSY).

The protein is F-box protein At2g21930 of Arabidopsis thaliana (Mouse-ear cress).